The primary structure comprises 602 residues: Trichothecene efflux pump TRI12 (602 aa).

The next 4 helical transmembrane spans lie at 49 to 69 (LTLL…SFII), 77 to 97 (NVSL…LLMG), 107 to 127 (GFIL…LYSF), and 134 to 154 (IGAQ…ILFI). The N-linked (GlcNAc...) asparagine glycan is linked to Asn160. The next 11 helical transmembrane spans lie at 164 to 184 (FLGN…GPYI), 196 to 216 (WIFY…FIFY), 240 to 260 (WIGA…VSWG), 271 to 291 (ILGL…YECY), 297 to 317 (PIIP…MLLI), 355 to 375 (STAG…FHIF), 380 to 400 (WQLI…ASVN), 408 to 428 (IAFS…TMLL), 450 to 470 (AICG…KFPG), 484 to 504 (WGFP…LTGQ), and 532 to 552 (AAAY…AIIA). Asn590 carries N-linked (GlcNAc...) asparagine glycosylation.

This sequence belongs to the major facilitator superfamily.

It is found in the cell membrane. Its function is as follows. Efflux pump that provides the dual role of trichothecene export and self-protection by allowing the fungus to evade the harmful effect of its own trichothecene production. In Trichoderma arundinaceum, this protein is Trichothecene efflux pump TRI12.